A 93-amino-acid polypeptide reads, in one-letter code: MTTNAVTSQSEKAYALLQADAEKIQKLIEVQLENLTMPQCPLYEEVLDTRMFGLSREIDFAIRLELVEEEKGKMILSELERKLALLHEASMRK.

Belongs to the UPF0358 family.

The chain is UPF0358 protein ABC2396 from Shouchella clausii (strain KSM-K16) (Alkalihalobacillus clausii).